Reading from the N-terminus, the 480-residue chain is Protein DETOXIFICATION 15 (480 aa).

12 helical membrane passes run 36 to 56 (GPLI…VMFV), 69 to 89 (IATS…ASAM), 118 to 138 (LLSV…VFFG), 143 to 163 (IAHL…AYGL), 180 to 200 (VVIC…VLVL), 208 to 228 (GAAV…SCYV), 255 to 275 (LVIP…ELLV), 294 to 314 (VWMI…NELG), 326 to 346 (RVVL…LILI), 360 to 380 (VVSH…LDSF), 396 to 416 (IGAF…GLLL), and 428 to 448 (WLGI…ITFF).

The protein belongs to the multi antimicrobial extrusion (MATE) (TC 2.A.66.1) family.

The protein localises to the membrane. The chain is Protein DETOXIFICATION 15 from Arabidopsis thaliana (Mouse-ear cress).